We begin with the raw amino-acid sequence, 102 residues long: Large ribosomal subunit protein bL21 (102 aa).

This sequence belongs to the bacterial ribosomal protein bL21 family. As to quaternary structure, part of the 50S ribosomal subunit. Contacts protein L20.

In terms of biological role, this protein binds to 23S rRNA in the presence of protein L20. The protein is Large ribosomal subunit protein bL21 of Marinomonas sp. (strain MWYL1).